A 322-amino-acid chain; its full sequence is Cytochrome f (322 aa).

The N-terminal stretch at 1–35 is a signal peptide; that stretch reads MQTRNTFSWTWIREEITRSISVSLMIYIITWSSIS. Residues Tyr-38, Cys-58, Cys-61, and His-62 each coordinate heme. The chain crosses the membrane as a helical span at residues 288-308; it reads VQGLLFFLGSVVLAQIFLVLK.

This sequence belongs to the cytochrome f family. The 4 large subunits of the cytochrome b6-f complex are cytochrome b6, subunit IV (17 kDa polypeptide, petD), cytochrome f and the Rieske protein, while the 4 small subunits are PetG, PetL, PetM and PetN. The complex functions as a dimer. Heme serves as cofactor.

It is found in the plastid. The protein resides in the chloroplast thylakoid membrane. Its function is as follows. Component of the cytochrome b6-f complex, which mediates electron transfer between photosystem II (PSII) and photosystem I (PSI), cyclic electron flow around PSI, and state transitions. This chain is Cytochrome f, found in Aethionema grandiflorum (Persian stone-cress).